Reading from the N-terminus, the 379-residue chain is Anhydro-N-acetylmuramic acid kinase (379 aa).

9-16 is a binding site for ATP; sequence GTSADGVD.

This sequence belongs to the anhydro-N-acetylmuramic acid kinase family.

It catalyses the reaction 1,6-anhydro-N-acetyl-beta-muramate + ATP + H2O = N-acetyl-D-muramate 6-phosphate + ADP + H(+). It participates in amino-sugar metabolism; 1,6-anhydro-N-acetylmuramate degradation. Its pathway is cell wall biogenesis; peptidoglycan recycling. Catalyzes the specific phosphorylation of 1,6-anhydro-N-acetylmuramic acid (anhMurNAc) with the simultaneous cleavage of the 1,6-anhydro ring, generating MurNAc-6-P. Is required for the utilization of anhMurNAc either imported from the medium or derived from its own cell wall murein, and thus plays a role in cell wall recycling. This is Anhydro-N-acetylmuramic acid kinase from Synechococcus sp. (strain CC9605).